The sequence spans 465 residues: Cysteine--tRNA ligase (465 aa).

Cysteine 27 is a binding site for Zn(2+). The short motif at 29–39 is the 'HIGH' region element; sequence PTVYNFFHIGN. Zn(2+) contacts are provided by cysteine 207, histidine 232, and glutamate 236. Positions 264–268 match the 'KMSKS' region motif; it reads KMSKS. An ATP-binding site is contributed by lysine 267.

The protein belongs to the class-I aminoacyl-tRNA synthetase family. In terms of assembly, monomer. Zn(2+) is required as a cofactor.

It localises to the cytoplasm. The enzyme catalyses tRNA(Cys) + L-cysteine + ATP = L-cysteinyl-tRNA(Cys) + AMP + diphosphate. In Clostridium botulinum (strain Loch Maree / Type A3), this protein is Cysteine--tRNA ligase.